The following is a 280-amino-acid chain: uncharacterized protein (280 aa).

Basic and acidic residues-rich tracts occupy residues 110–122, 167–177, 223–261, and 269–280; these read EKQAHDDHPERLQ, ATGEERAECGR, ARQHDQRGDRRKGEGDRQKHGDRRGRPDARKNADQRPQQ, and DVDRSKSCLEAE. Disordered stretches follow at residues 110-137, 151-177, and 219-280; these read EKQAHDDHPERLQNRSVRQRNGDKKTEH, HRGERRSGNCQQQGRHATGEERAECGR, and TIID…LEAE.

This is an uncharacterized protein from Agrobacterium vitis (Rhizobium vitis).